The sequence spans 157 residues: Small ribosomal subunit protein uS7 (157 aa).

It belongs to the universal ribosomal protein uS7 family. In terms of assembly, part of the 30S ribosomal subunit. Contacts proteins S9 and S11.

In terms of biological role, one of the primary rRNA binding proteins, it binds directly to 16S rRNA where it nucleates assembly of the head domain of the 30S subunit. Is located at the subunit interface close to the decoding center, probably blocks exit of the E-site tRNA. This Phenylobacterium zucineum (strain HLK1) protein is Small ribosomal subunit protein uS7.